Consider the following 191-residue polypeptide: Transcription factor FapR (191 aa).

Residues 102-169 form the MaoC-like domain; the sequence is GIARGHHLFA…RILVTSHVNQ (68 aa).

It belongs to the FapR family.

Transcriptional factor involved in regulation of membrane lipid biosynthesis by repressing genes involved in fatty acid and phospholipid metabolism. This chain is Transcription factor FapR, found in Shouchella clausii (strain KSM-K16) (Alkalihalobacillus clausii).